The following is a 305-amino-acid chain: UDP-3-O-acyl-N-acetylglucosamine deacetylase (305 aa).

Zn(2+)-binding residues include H78, H237, and D241. H264 functions as the Proton donor in the catalytic mechanism.

This sequence belongs to the LpxC family. Zn(2+) serves as cofactor.

It carries out the reaction a UDP-3-O-[(3R)-3-hydroxyacyl]-N-acetyl-alpha-D-glucosamine + H2O = a UDP-3-O-[(3R)-3-hydroxyacyl]-alpha-D-glucosamine + acetate. Its pathway is glycolipid biosynthesis; lipid IV(A) biosynthesis; lipid IV(A) from (3R)-3-hydroxytetradecanoyl-[acyl-carrier-protein] and UDP-N-acetyl-alpha-D-glucosamine: step 2/6. Functionally, catalyzes the hydrolysis of UDP-3-O-myristoyl-N-acetylglucosamine to form UDP-3-O-myristoylglucosamine and acetate, the committed step in lipid A biosynthesis. In Cupriavidus taiwanensis (strain DSM 17343 / BCRC 17206 / CCUG 44338 / CIP 107171 / LMG 19424 / R1) (Ralstonia taiwanensis (strain LMG 19424)), this protein is UDP-3-O-acyl-N-acetylglucosamine deacetylase.